The chain runs to 78 residues: Acyl carrier protein (78 aa).

The 76-residue stretch at 2 to 77 (STIEERVKKI…AAIDYINGHQ (76 aa)) folds into the Carrier domain. Serine 37 is subject to O-(pantetheine 4'-phosphoryl)serine.

This sequence belongs to the acyl carrier protein (ACP) family. Post-translationally, 4'-phosphopantetheine is transferred from CoA to a specific serine of apo-ACP by AcpS. This modification is essential for activity because fatty acids are bound in thioester linkage to the sulfhydryl of the prosthetic group.

The protein resides in the cytoplasm. The protein operates within lipid metabolism; fatty acid biosynthesis. Carrier of the growing fatty acid chain in fatty acid biosynthesis. This is Acyl carrier protein from Shigella flexneri.